The chain runs to 372 residues: Glutamate 5-kinase (372 aa).

Residue Lys-14 coordinates ATP. Ser-54, Asp-141, and Asn-153 together coordinate substrate. Thr-173–Asp-174 contacts ATP. Positions Arg-280–Met-358 constitute a PUA domain.

Belongs to the glutamate 5-kinase family.

It is found in the cytoplasm. It carries out the reaction L-glutamate + ATP = L-glutamyl 5-phosphate + ADP. It participates in amino-acid biosynthesis; L-proline biosynthesis; L-glutamate 5-semialdehyde from L-glutamate: step 1/2. Its function is as follows. Catalyzes the transfer of a phosphate group to glutamate to form L-glutamate 5-phosphate. The polypeptide is Glutamate 5-kinase (Paraburkholderia phytofirmans (strain DSM 17436 / LMG 22146 / PsJN) (Burkholderia phytofirmans)).